The following is a 57-amino-acid chain: Large ribosomal subunit protein bL32 (57 aa).

The span at 1–19 (MATPKFKKSRANTHSRRSQ) shows a compositional bias: basic residues. Residues 1–20 (MATPKFKKSRANTHSRRSQW) form a disordered region.

Belongs to the bacterial ribosomal protein bL32 family.

This Corynebacterium aurimucosum (strain ATCC 700975 / DSM 44827 / CIP 107346 / CN-1) (Corynebacterium nigricans) protein is Large ribosomal subunit protein bL32.